The following is a 499-amino-acid chain: Cysteine--tRNA ligase (499 aa).

Cysteine 31 is a binding site for Zn(2+). The 'HIGH' region motif lies at 33–43; it reads VTVYDLCHLGH. Zn(2+) is bound by residues cysteine 215, histidine 240, and glutamate 244. The short motif at 272 to 276 is the 'KMSKS' region element; that stretch reads KMSKS. Position 275 (lysine 275) interacts with ATP.

It belongs to the class-I aminoacyl-tRNA synthetase family. In terms of assembly, monomer. Requires Zn(2+) as cofactor.

The protein resides in the cytoplasm. It catalyses the reaction tRNA(Cys) + L-cysteine + ATP = L-cysteinyl-tRNA(Cys) + AMP + diphosphate. This Synechococcus sp. (strain WH7803) protein is Cysteine--tRNA ligase.